The sequence spans 957 residues: Glycine dehydrogenase (decarboxylating) (957 aa).

Lys708 carries the N6-(pyridoxal phosphate)lysine modification.

This sequence belongs to the GcvP family. In terms of assembly, the glycine cleavage system is composed of four proteins: P, T, L and H. The cofactor is pyridoxal 5'-phosphate.

The enzyme catalyses N(6)-[(R)-lipoyl]-L-lysyl-[glycine-cleavage complex H protein] + glycine + H(+) = N(6)-[(R)-S(8)-aminomethyldihydrolipoyl]-L-lysyl-[glycine-cleavage complex H protein] + CO2. In terms of biological role, the glycine cleavage system catalyzes the degradation of glycine. The P protein binds the alpha-amino group of glycine through its pyridoxal phosphate cofactor; CO(2) is released and the remaining methylamine moiety is then transferred to the lipoamide cofactor of the H protein. This is Glycine dehydrogenase (decarboxylating) from Shigella sonnei (strain Ss046).